Here is a 229-residue protein sequence, read N- to C-terminus: Cytochrome c oxidase subunit 2 (229 aa).

The Mitochondrial intermembrane portion of the chain corresponds to 1–14; that stretch reads MANPTHLGFQDAMS. The helical transmembrane segment at 15-45 threads the bilayer; it reads PLMEELLYFHDHTLMILFLISSLVFYMIFAL. At 46–59 the chain is on the mitochondrial matrix side; sequence LFPKLYYPNTSDVQ. Residues 60 to 87 traverse the membrane as a helical segment; the sequence is EVEVIWTVLPAIVLISIALPSLRTLYLM. The Mitochondrial intermembrane portion of the chain corresponds to 88 to 229; that stretch reads DETNNPCLTI…QLWLEDSILS (142 aa). Residues H161, C196, E198, C200, H204, and M207 each contribute to the Cu cation site. E198 contributes to the Mg(2+) binding site.

This sequence belongs to the cytochrome c oxidase subunit 2 family. In terms of assembly, component of the cytochrome c oxidase (complex IV, CIV), a multisubunit enzyme composed of 14 subunits. The complex is composed of a catalytic core of 3 subunits MT-CO1, MT-CO2 and MT-CO3, encoded in the mitochondrial DNA, and 11 supernumerary subunits COX4I, COX5A, COX5B, COX6A, COX6B, COX6C, COX7A, COX7B, COX7C, COX8 and NDUFA4, which are encoded in the nuclear genome. The complex exists as a monomer or a dimer and forms supercomplexes (SCs) in the inner mitochondrial membrane with NADH-ubiquinone oxidoreductase (complex I, CI) and ubiquinol-cytochrome c oxidoreductase (cytochrome b-c1 complex, complex III, CIII), resulting in different assemblies (supercomplex SCI(1)III(2)IV(1) and megacomplex MCI(2)III(2)IV(2)). Found in a complex with TMEM177, COA6, COX18, COX20, SCO1 and SCO2. Interacts with TMEM177 in a COX20-dependent manner. Interacts with COX20. Interacts with COX16. It depends on Cu cation as a cofactor.

The protein localises to the mitochondrion inner membrane. The enzyme catalyses 4 Fe(II)-[cytochrome c] + O2 + 8 H(+)(in) = 4 Fe(III)-[cytochrome c] + 2 H2O + 4 H(+)(out). Component of the cytochrome c oxidase, the last enzyme in the mitochondrial electron transport chain which drives oxidative phosphorylation. The respiratory chain contains 3 multisubunit complexes succinate dehydrogenase (complex II, CII), ubiquinol-cytochrome c oxidoreductase (cytochrome b-c1 complex, complex III, CIII) and cytochrome c oxidase (complex IV, CIV), that cooperate to transfer electrons derived from NADH and succinate to molecular oxygen, creating an electrochemical gradient over the inner membrane that drives transmembrane transport and the ATP synthase. Cytochrome c oxidase is the component of the respiratory chain that catalyzes the reduction of oxygen to water. Electrons originating from reduced cytochrome c in the intermembrane space (IMS) are transferred via the dinuclear copper A center (CU(A)) of subunit 2 and heme A of subunit 1 to the active site in subunit 1, a binuclear center (BNC) formed by heme A3 and copper B (CU(B)). The BNC reduces molecular oxygen to 2 water molecules using 4 electrons from cytochrome c in the IMS and 4 protons from the mitochondrial matrix. The chain is Cytochrome c oxidase subunit 2 (MT-CO2) from Alligator mississippiensis (American alligator).